The chain runs to 214 residues: Putative glucose-6-phosphate isomerase 1 (214 aa).

4 residues coordinate Fe cation: H92, H94, E101, and H140.

This sequence belongs to the archaeal-type GPI family. In terms of assembly, homodimer. Fe cation serves as cofactor.

It localises to the cytoplasm. The enzyme catalyses alpha-D-glucose 6-phosphate = beta-D-fructose 6-phosphate. It functions in the pathway carbohydrate degradation; glycolysis; D-glyceraldehyde 3-phosphate and glycerone phosphate from D-glucose: step 2/4. The protein is Putative glucose-6-phosphate isomerase 1 (pgiA1) of Rhizobium meliloti (strain 1021) (Ensifer meliloti).